A 307-amino-acid chain; its full sequence is Opsin-like protein carO (307 aa).

N-linked (GlcNAc...) asparagine glycosylation is present at Asn-28. The next 7 helical transmembrane spans lie at 36-56 (WYWA…GLGM), 64-84 (IFHY…FTMA), 118-138 (WFLT…MPWP), 140-160 (VLWV…GALV), 166-186 (WGYF…LAWE), 202-222 (FVMC…AWGV), and 235-255 (AVFY…LLLW). A disordered region spans residues 280 to 307 (GPNNKVASGHGARNDTATASGSNVNPNA). Asn-293 is a glycosylation site (N-linked (GlcNAc...) asparagine). Positions 294–307 (DTATASGSNVNPNA) are enriched in polar residues.

Belongs to the archaeal/bacterial/fungal opsin family.

It is found in the membrane. Opsin-like protein; part of the car gene cluster that mediates the biosynthesis of neurosporaxanthin, a carboxylic apocarotenoid acting as an essential protective pigment and leading to orange pigmentation. The exact role of carO in carotenoid biosynthesis is not known yet, but it could be involved in the regulation of the pathway by light or other stimuli. The chain is Opsin-like protein carO from Fusarium fujikuroi (Bakanae and foot rot disease fungus).